Consider the following 214-residue polypeptide: ATP phosphoribosyltransferase (214 aa).

This sequence belongs to the ATP phosphoribosyltransferase family. Short subfamily. In terms of assembly, heteromultimer composed of HisG and HisZ subunits.

The protein resides in the cytoplasm. It catalyses the reaction 1-(5-phospho-beta-D-ribosyl)-ATP + diphosphate = 5-phospho-alpha-D-ribose 1-diphosphate + ATP. The protein operates within amino-acid biosynthesis; L-histidine biosynthesis; L-histidine from 5-phospho-alpha-D-ribose 1-diphosphate: step 1/9. Its function is as follows. Catalyzes the condensation of ATP and 5-phosphoribose 1-diphosphate to form N'-(5'-phosphoribosyl)-ATP (PR-ATP). Has a crucial role in the pathway because the rate of histidine biosynthesis seems to be controlled primarily by regulation of HisG enzymatic activity. The sequence is that of ATP phosphoribosyltransferase from Deinococcus deserti (strain DSM 17065 / CIP 109153 / LMG 22923 / VCD115).